The sequence spans 214 residues: Probable nicotinate-nucleotide adenylyltransferase (214 aa).

The protein belongs to the NadD family.

It catalyses the reaction nicotinate beta-D-ribonucleotide + ATP + H(+) = deamido-NAD(+) + diphosphate. It functions in the pathway cofactor biosynthesis; NAD(+) biosynthesis; deamido-NAD(+) from nicotinate D-ribonucleotide: step 1/1. Functionally, catalyzes the reversible adenylation of nicotinate mononucleotide (NaMN) to nicotinic acid adenine dinucleotide (NaAD). This Pelodictyon phaeoclathratiforme (strain DSM 5477 / BU-1) protein is Probable nicotinate-nucleotide adenylyltransferase.